A 187-amino-acid chain; its full sequence is Prepronociceptin (187 aa).

An N-terminal signal peptide occupies residues 1–19; sequence MKILFCDVLLLSLLSSVFS. A propeptide spanning residues 20-95 is cleaved from the precursor; the sequence is SCPRDCLTCQ…QPKASEMQHL (76 aa). Repeat copies occupy residues 109-114, 115-120, and 121-126. A 3 X 6 AA tandem repeats of D-A-E-P-G-A region spans residues 109-126; sequence DAEPGADAEPGADAEPGA. The segment at 109–133 is disordered; it reads DAEPGADAEPGADAEPGADDAEEVE. Residues 112–131 show a composition bias toward acidic residues; sequence PGADAEPGADAEPGADDAEE. A propeptide spanning residues 180 to 187 is cleaved from the precursor; it reads TLHQNGNV.

This sequence belongs to the opioid neuropeptide precursor family. Specific enzymatic cleavages at paired basic residues probably yield other active peptides besides nociceptin. In terms of processing, the N-terminal domain contains 6 conserved cysteines thought to be involved in disulfide bonding and/or processing. As to expression, brain and spinal cord. Low levels in kidney and spleen.

Its subcellular location is the secreted. Functionally, ligand of the opioid receptor-like receptor OPRL1. It may act as a transmitter in the brain by modulating nociceptive and locomotor behavior. May be involved in neuronal differentiation and development. When administered intracerebroventricularly, nociceptin induces hyperalgesia and decreases locomotor activity. Blocks nociceptin action in pain transmission by inhibiting nociceptin-induced hyperalgesia and allodynia. Its function is as follows. Has potent analgesic activity. In Mus musculus (Mouse), this protein is Prepronociceptin (Pnoc).